We begin with the raw amino-acid sequence, 364 residues long: Cobalt-precorrin-5B C(1)-methyltransferase (364 aa).

The protein belongs to the CbiD family.

The enzyme catalyses Co-precorrin-5B + S-adenosyl-L-methionine = Co-precorrin-6A + S-adenosyl-L-homocysteine. Its pathway is cofactor biosynthesis; adenosylcobalamin biosynthesis; cob(II)yrinate a,c-diamide from sirohydrochlorin (anaerobic route): step 6/10. In terms of biological role, catalyzes the methylation of C-1 in cobalt-precorrin-5B to form cobalt-precorrin-6A. In Pseudomonas entomophila (strain L48), this protein is Cobalt-precorrin-5B C(1)-methyltransferase.